Consider the following 122-residue polypeptide: Small ribosomal subunit protein uS13 (122 aa).

Residues 95-122 are disordered; that stretch reads NLPVRGQRTHTNARTRKGKAKPIAGKKK.

Belongs to the universal ribosomal protein uS13 family. In terms of assembly, part of the 30S ribosomal subunit. Forms a loose heterodimer with protein S19. Forms two bridges to the 50S subunit in the 70S ribosome.

Its function is as follows. Located at the top of the head of the 30S subunit, it contacts several helices of the 16S rRNA. In the 70S ribosome it contacts the 23S rRNA (bridge B1a) and protein L5 of the 50S subunit (bridge B1b), connecting the 2 subunits; these bridges are implicated in subunit movement. Contacts the tRNAs in the A and P-sites. The protein is Small ribosomal subunit protein uS13 of Methylobacterium nodulans (strain LMG 21967 / CNCM I-2342 / ORS 2060).